Reading from the N-terminus, the 698-residue chain is Potassium-transporting ATPase ATP-binding subunit (698 aa).

The next 4 membrane-spanning stretches (helical) occupy residues 56–76, 82–102, 240–260, and 271–291; these read IMFV…VPSL, LWFN…ANFA, TVLI…PLFT, and ILVA…LSAI. Asp324 (4-aspartylphosphate intermediate) is an active-site residue. ATP is bound by residues Asp361, Glu365, 393–400, and Lys412; that span reads FKAETRMS. Mg(2+)-binding residues include Asp535 and Asp539. A run of 3 helical transmembrane segments spans residues 605-625, 633-653, and 677-697; these read FAII…LNIM, AILS…PLAM, and GGVL…GLFI.

It belongs to the cation transport ATPase (P-type) (TC 3.A.3) family. Type IA subfamily. As to quaternary structure, the system is composed of three essential subunits: KdpA, KdpB and KdpC.

It is found in the cell membrane. It carries out the reaction K(+)(out) + ATP + H2O = K(+)(in) + ADP + phosphate + H(+). Functionally, part of the high-affinity ATP-driven potassium transport (or Kdp) system, which catalyzes the hydrolysis of ATP coupled with the electrogenic transport of potassium into the cytoplasm. This subunit is responsible for energy coupling to the transport system and for the release of the potassium ions to the cytoplasm. The polypeptide is Potassium-transporting ATPase ATP-binding subunit (Bacillus cytotoxicus (strain DSM 22905 / CIP 110041 / 391-98 / NVH 391-98)).